A 507-amino-acid polypeptide reads, in one-letter code: Tabersonine/lochnericine 19-hydroxylase (507 aa).

Residues phenylalanine 8–phenylalanine 28 traverse the membrane as a helical segment. An N-linked (GlcNAc...) asparagine glycan is attached at asparagine 167. Cysteine 447 lines the heme pocket.

It belongs to the cytochrome P450 family. Requires heme as cofactor. In terms of tissue distribution, confined to roots.

It localises to the endoplasmic reticulum membrane. It catalyses the reaction (-)-tabersonine + reduced [NADPH--hemoprotein reductase] + O2 = (-)-(R)-19-hydroxytabersonine + oxidized [NADPH--hemoprotein reductase] + H2O + H(+). It carries out the reaction lochnericine + reduced [NADPH--hemoprotein reductase] + O2 = horhammericine + oxidized [NADPH--hemoprotein reductase] + H2O + H(+). The catalysed reaction is (-)-vincadifformine + reduced [NADPH--hemoprotein reductase] + O2 = (-)-minovincinine + oxidized [NADPH--hemoprotein reductase] + H2O + H(+). The protein operates within alkaloid biosynthesis. Its function is as follows. Component of the monoterpenoid indole alkaloids (MIAs, e.g. echitovenine, tabersonine, lochnericine, 19-hydroxytabersonine and horhammericine) biosynthetic pathway; MIAs are used in cancer treatment and other medical applications. Cytochrome P450 catalyzing the conversion of (-)-tabersonine to 19-hydroxytabersonine, of lochnericine to horhammericine and of (-)-vincadifformine to (-)-minovincinine. This is Tabersonine/lochnericine 19-hydroxylase from Catharanthus roseus (Madagascar periwinkle).